A 206-amino-acid polypeptide reads, in one-letter code: Small ribosomal subunit protein uS4 (206 aa).

The S4 RNA-binding domain occupies 96–157; the sequence is RRLDNVVYRM…KAKKQVRIQD (62 aa).

This sequence belongs to the universal ribosomal protein uS4 family. In terms of assembly, part of the 30S ribosomal subunit. Contacts protein S5. The interaction surface between S4 and S5 is involved in control of translational fidelity.

One of the primary rRNA binding proteins, it binds directly to 16S rRNA where it nucleates assembly of the body of the 30S subunit. Its function is as follows. With S5 and S12 plays an important role in translational accuracy. The chain is Small ribosomal subunit protein uS4 from Thioalkalivibrio sulfidiphilus (strain HL-EbGR7).